The primary structure comprises 323 residues: tRNA dimethylallyltransferase (323 aa).

12 to 19 (GPTAAGKT) lines the ATP pocket. Position 14 to 19 (14 to 19 (TAAGKT)) interacts with substrate. Interaction with substrate tRNA regions lie at residues 37-40 (DSAL) and 161-165 (QRLIR).

This sequence belongs to the IPP transferase family. In terms of assembly, monomer. Requires Mg(2+) as cofactor.

The catalysed reaction is adenosine(37) in tRNA + dimethylallyl diphosphate = N(6)-dimethylallyladenosine(37) in tRNA + diphosphate. In terms of biological role, catalyzes the transfer of a dimethylallyl group onto the adenine at position 37 in tRNAs that read codons beginning with uridine, leading to the formation of N6-(dimethylallyl)adenosine (i(6)A). The protein is tRNA dimethylallyltransferase of Pseudomonas putida (strain W619).